We begin with the raw amino-acid sequence, 71 residues long: Small ribosomal subunit protein bS21 (71 aa).

A disordered region spans residues 48 to 71 (ENATLAKRHAKRNARENARNTRLY). Residues 60-71 (NARENARNTRLY) show a composition bias toward basic and acidic residues.

Belongs to the bacterial ribosomal protein bS21 family.

This is Small ribosomal subunit protein bS21 from Haemophilus influenzae (strain 86-028NP).